The sequence spans 899 residues: Lipoxygenase 2, chloroplastic (899 aa).

The N-terminal 57 residues, 1 to 57 (MLKPQIHKPHLVNKLPLGTPFIPSHASIASFSTTSLRTLSVQKCYRRYIRYTSSNIK), are a transit peptide targeting the chloroplast. Residues 83–203 (ALTAVTVGLL…DNPDKRIFFL (121 aa)) enclose the PLAT domain. In terms of domain architecture, Lipoxygenase spans 206-899 (SYLPSETPEG…GKGVPYSISI (694 aa)). Residues 252–286 (DPDTDSDMARPVLGGNEHPFPRRCRTGRKMTSTEP) form a disordered region. Positions 557, 562, 749, 753, and 899 each coordinate Fe cation.

Belongs to the lipoxygenase family. Fe cation serves as cofactor. As to expression, confined to glandular trichomes in flowers.

Its subcellular location is the plastid. It localises to the chloroplast. Its pathway is lipid metabolism; oxylipin biosynthesis. Its function is as follows. Plant lipoxygenases may be involved in a number of diverse aspects of plant physiology including growth and development, pest resistance, and senescence or responses to wounding. Catalyzes the hydroperoxidation of lipids containing a cis,cis-1,4-pentadiene structure. The sequence is that of Lipoxygenase 2, chloroplastic from Tanacetum cinerariifolium (Dalmatian daisy).